Reading from the N-terminus, the 156-residue chain is 6,7-dimethyl-8-ribityllumazine synthase (156 aa).

Residues phenylalanine 22, 57–59, and 81–83 each bind 5-amino-6-(D-ribitylamino)uracil; these read AYE and TVI. 86-87 lines the (2S)-2-hydroxy-3-oxobutyl phosphate pocket; the sequence is GT. The active-site Proton donor is the histidine 89. A 5-amino-6-(D-ribitylamino)uracil-binding site is contributed by phenylalanine 114. Arginine 128 is a binding site for (2S)-2-hydroxy-3-oxobutyl phosphate.

It belongs to the DMRL synthase family. Forms an icosahedral capsid composed of 60 subunits, arranged as a dodecamer of pentamers.

It catalyses the reaction (2S)-2-hydroxy-3-oxobutyl phosphate + 5-amino-6-(D-ribitylamino)uracil = 6,7-dimethyl-8-(1-D-ribityl)lumazine + phosphate + 2 H2O + H(+). The protein operates within cofactor biosynthesis; riboflavin biosynthesis; riboflavin from 2-hydroxy-3-oxobutyl phosphate and 5-amino-6-(D-ribitylamino)uracil: step 1/2. Its function is as follows. Catalyzes the formation of 6,7-dimethyl-8-ribityllumazine by condensation of 5-amino-6-(D-ribitylamino)uracil with 3,4-dihydroxy-2-butanone 4-phosphate. This is the penultimate step in the biosynthesis of riboflavin. This is 6,7-dimethyl-8-ribityllumazine synthase from Erwinia tasmaniensis (strain DSM 17950 / CFBP 7177 / CIP 109463 / NCPPB 4357 / Et1/99).